We begin with the raw amino-acid sequence, 157 residues long: MSSEEGKLFVGGLNFNTDEQALEDHFSSFGPISEVVVVKDRETQRSRGFGFITFTNPEHASVAMRAMNGESLDGRQIRVDHAGKSARGTRGGGFGAHGRGRSYSRGGGDQGYGSGRYYDSRPGGYGYGYGRSRDYNGRNQGGYDRYSGGNYRDNYDN.

Residues 6–84 (GKLFVGGLNF…RQIRVDHAGK (79 aa)) enclose the RRM domain. Arg-47 carries the omega-N-methylarginine modification. The interval 81–157 (HAGKSARGTR…GGNYRDNYDN (77 aa)) is disordered. An Asymmetric dimethylarginine; alternate modification is found at Arg-105. Position 105 is a dimethylated arginine; in A2780 ovarian carcinoma cell line (Arg-105). Residue Arg-105 is modified to Omega-N-methylarginine; alternate. A compositionally biased stretch (gly residues) spans 105–114 (RGGGDQGYGS). Arg-121 and Arg-131 each carry omega-N-methylarginine. At Ser-147 the chain carries Phosphoserine. Tyr-155 is subject to Phosphotyrosine.

In terms of assembly, interacts with RPL4. Associates with the 60S ribosomal subunits in an RNA-independent manner. Associates with ribosomes. Arg-105 is dimethylated, probably to asymmetric dimethylarginine. Post-translationally, phosphorylated.

It is found in the nucleus. The protein resides in the cytoplasm. It localises to the cell projection. The protein localises to the dendrite. Its function is as follows. Cold-inducible mRNA binding protein that enhances global protein synthesis at both physiological and mild hypothermic temperatures. Reduces the relative abundance of microRNAs, when overexpressed. Enhances phosphorylation of translation initiation factors and active polysome formation. This is RNA-binding protein 3 (RBM3) from Homo sapiens (Human).